Consider the following 496-residue polypeptide: 7,8-epoxymelianol synthase CYP88A154 (496 aa).

The chain crosses the membrane as a helical span at residues 11-31 (FNFLWLILAIFVGTYVVLFGF). Cys444 is a heme binding site.

This sequence belongs to the cytochrome P450 family. The cofactor is heme.

It localises to the membrane. It carries out the reaction melianol + reduced [NADPH--hemoprotein reductase] + O2 = 7,8-epoxymelianol + oxidized [NADPH--hemoprotein reductase] + H2O + H(+). Its pathway is secondary metabolite biosynthesis; terpenoid biosynthesis. Monooxygenase involved in the biosynthesis of glabretanes, limonoids and quassinoids triterpene natural products such as ailanthone, chaparrinone, glaucarubinone and amarolide, allelopathic degraded triterpene lactones inhibiting the growth of other plants, and possessing antimalarial, antifeedant, insecticidal, anti-inflammatory and anticancer activities. Catalyzes the epoxidation of melianol to produce 7,8-epoxymelianol. In Ailanthus altissima (Tree-of-heaven), this protein is 7,8-epoxymelianol synthase CYP88A154.